The sequence spans 105 residues: Small ribosomal subunit protein eS24 (105 aa).

The protein belongs to the eukaryotic ribosomal protein eS24 family.

This chain is Small ribosomal subunit protein eS24, found in Ignicoccus hospitalis (strain KIN4/I / DSM 18386 / JCM 14125).